The following is a 426-amino-acid chain: uncharacterized protein (426 aa).

The interval 17–114 (KRDRPFSPDR…PDKKGEYIYP (98 aa)) is disordered.

It is found in the plastid. This is an uncharacterized protein from Euglena longa (Euglenophycean alga).